The sequence spans 51 residues: Large ribosomal subunit protein bL33 (51 aa).

The protein belongs to the bacterial ribosomal protein bL33 family.

In Nitrosococcus oceani (strain ATCC 19707 / BCRC 17464 / JCM 30415 / NCIMB 11848 / C-107), this protein is Large ribosomal subunit protein bL33.